The sequence spans 528 residues: GMP synthase [glutamine-hydrolyzing] (528 aa).

One can recognise a Glutamine amidotransferase type-1 domain in the interval 13–204 (SILILDFGSQ…VYSISKCKAD (192 aa)). The active-site Nucleophile is the Cys-90. Catalysis depends on residues His-178 and Glu-180. Positions 205–403 (WNTETFLEET…LGLPDEIIKR (199 aa)) constitute a GMPS ATP-PPase domain. 232–238 (SGGVDSS) lines the ATP pocket.

As to quaternary structure, homodimer.

It catalyses the reaction XMP + L-glutamine + ATP + H2O = GMP + L-glutamate + AMP + diphosphate + 2 H(+). It participates in purine metabolism; GMP biosynthesis; GMP from XMP (L-Gln route): step 1/1. In terms of biological role, catalyzes the synthesis of GMP from XMP. This is GMP synthase [glutamine-hydrolyzing] from Prochlorococcus marinus (strain MIT 9515).